A 120-amino-acid chain; its full sequence is NAD(P)H-quinone oxidoreductase subunit 3, chloroplastic (120 aa).

Helical transmembrane passes span 9–29 (IFWA…LISG), 64–84 (MFAL…PWAM), and 88–108 (VLGV…IVGS).

Belongs to the complex I subunit 3 family. NDH is composed of at least 16 different subunits, 5 of which are encoded in the nucleus.

Its subcellular location is the plastid. The protein resides in the chloroplast thylakoid membrane. It catalyses the reaction a plastoquinone + NADH + (n+1) H(+)(in) = a plastoquinol + NAD(+) + n H(+)(out). The enzyme catalyses a plastoquinone + NADPH + (n+1) H(+)(in) = a plastoquinol + NADP(+) + n H(+)(out). Functionally, NDH shuttles electrons from NAD(P)H:plastoquinone, via FMN and iron-sulfur (Fe-S) centers, to quinones in the photosynthetic chain and possibly in a chloroplast respiratory chain. The immediate electron acceptor for the enzyme in this species is believed to be plastoquinone. Couples the redox reaction to proton translocation, and thus conserves the redox energy in a proton gradient. This Phaseolus vulgaris (Kidney bean) protein is NAD(P)H-quinone oxidoreductase subunit 3, chloroplastic.